The primary structure comprises 232 residues: Thiamine import ATP-binding protein ThiQ (232 aa).

The ABC transporter domain maps to 2–230 (LKLTDITWLY…KGSASAIWGI (229 aa)). Residue 32-39 (GPSGAGKS) participates in ATP binding.

It belongs to the ABC transporter superfamily. Thiamine importer (TC 3.A.1.19.1) family. As to quaternary structure, the complex is composed of two ATP-binding proteins (ThiQ), two transmembrane proteins (ThiP) and a solute-binding protein (ThiB).

Its subcellular location is the cell inner membrane. It catalyses the reaction thiamine(out) + ATP + H2O = thiamine(in) + ADP + phosphate + H(+). Its function is as follows. Part of the ABC transporter complex ThiBPQ involved in thiamine import. Responsible for energy coupling to the transport system. The sequence is that of Thiamine import ATP-binding protein ThiQ from Shigella flexneri.